We begin with the raw amino-acid sequence, 226 residues long: Gap junction beta-2 protein (226 aa).

At Met-1–Ile-20 the chain is on the cytoplasmic side. A helical membrane pass occupies residues Gly-21 to Ala-40. Over Lys-41–Arg-75 the chain is Extracellular. 3 cysteine pairs are disulfide-bonded: Cys-53–Cys-180, Cys-60–Cys-174, and Cys-64–Cys-169. The helical transmembrane segment at Leu-76 to Tyr-98 threads the bilayer. The Cytoplasmic portion of the chain corresponds to Arg-99 to Ser-131. Residues Leu-132–Phe-154 traverse the membrane as a helical segment. The Extracellular portion of the chain corresponds to Tyr-155 to Thr-192. Residues Val-193–Ile-215 form a helical membrane-spanning segment. Topologically, residues Arg-216–Val-226 are cytoplasmic.

The protein belongs to the connexin family. In terms of assembly, a connexon is composed of a hexamer of connexins. Interacts with CNST.

It is found in the cell membrane. Its subcellular location is the cell junction. It localises to the gap junction. Its function is as follows. One gap junction consists of a cluster of closely packed pairs of transmembrane channels, the connexons, through which materials of low MW diffuse from one cell to a neighboring cell. This chain is Gap junction beta-2 protein (GJB2), found in Bos taurus (Bovine).